Reading from the N-terminus, the 227-residue chain is Translation initiation factor 6 (227 aa).

It belongs to the eIF-6 family.

Binds to the 50S ribosomal subunit and prevents its association with the 30S ribosomal subunit to form the 70S initiation complex. The protein is Translation initiation factor 6 of Staphylothermus marinus (strain ATCC 43588 / DSM 3639 / JCM 9404 / F1).